Here is a 57-residue protein sequence, read N- to C-terminus: MNRIVAPAAASVVVGLLLGAAAIFGVTLMVQQDKKPPLPGGDPSSSVLNRVEYGNRS.

The signal sequence occupies residues 1–32; it reads MNRIVAPAAASVVVGLLLGAAAIFGVTLMVQQ. The disordered stretch occupies residues 34 to 57; that stretch reads KKPPLPGGDPSSSVLNRVEYGNRS.

The chain is Putative secreted protein MT0250 from Mycobacterium tuberculosis (strain CDC 1551 / Oshkosh).